An 872-amino-acid chain; its full sequence is Homeobox-leucine zipper protein ROC6 (872 aa).

2 disordered regions span residues 28-53 and 67-130; these read VHNSRLLPTPPVPKPGGGFAAPGLSL and NRSL…HRHT. Residues 74-85 are compositionally biased toward gly residues; sequence GNGGSGSGGDGD. Residues 86-99 are compositionally biased toward basic and acidic residues; the sequence is SLGRGREEENDSRS. Positions 119 to 130 are enriched in basic residues; that stretch reads PRKKKKRYHRHT. A DNA-binding region (homeobox) is located at residues 122–181; that stretch reads KKKRYHRHTPQQIQELEAVFKECPHPDEKQRMELSRRLNLESRQVKFWFQNRRTQMKQTQ. Residues 176-248 are a coiled coil; the sequence is QMKQTQIERH…LKDELDRVCA (73 aa). In terms of domain architecture, START spans 340 to 583; the sequence is GAIDRAVLLE…LQRQCQYLAI (244 aa). Residues 792–818 form a disordered region; the sequence is HNNGASPSPAEVGSGASPNSAAGGGGG.

This sequence belongs to the HD-ZIP homeobox family. Class IV subfamily.

It is found in the nucleus. Its function is as follows. Probable transcription factor. The protein is Homeobox-leucine zipper protein ROC6 (ROC6) of Oryza sativa subsp. japonica (Rice).